A 250-amino-acid polypeptide reads, in one-letter code: Triosephosphate isomerase (250 aa).

9 to 11 (NWK) provides a ligand contact to substrate. H94 (electrophile) is an active-site residue. The active-site Proton acceptor is the E166. Residues G172, S212, and 233-234 (GG) contribute to the substrate site.

Belongs to the triosephosphate isomerase family. As to quaternary structure, homodimer.

It localises to the cytoplasm. The enzyme catalyses D-glyceraldehyde 3-phosphate = dihydroxyacetone phosphate. Its pathway is carbohydrate biosynthesis; gluconeogenesis. The protein operates within carbohydrate degradation; glycolysis; D-glyceraldehyde 3-phosphate from glycerone phosphate: step 1/1. In terms of biological role, involved in the gluconeogenesis. Catalyzes stereospecifically the conversion of dihydroxyacetone phosphate (DHAP) to D-glyceraldehyde-3-phosphate (G3P). The sequence is that of Triosephosphate isomerase from Treponema denticola (strain ATCC 35405 / DSM 14222 / CIP 103919 / JCM 8153 / KCTC 15104).